A 313-amino-acid polypeptide reads, in one-letter code: Pyrimidine-specific ribonucleoside hydrolase RihB (313 aa).

Residue Asp-11 is the Proton acceptor of the active site. Ca(2+) contacts are provided by Asp-11, Asp-16, and Val-124. The substrate site is built by Gln-227 and His-239. Residue Asp-240 participates in Ca(2+) binding.

The protein belongs to the IUNH family. RihB subfamily. Homotetramer. It depends on Ca(2+) as a cofactor.

It carries out the reaction a pyrimidine ribonucleoside + H2O = a pyrimidine nucleobase + D-ribose. In terms of biological role, hydrolyzes cytidine or uridine to ribose and cytosine or uracil, respectively. Has a clear preference for cytidine over uridine. Strictly specific for ribonucleosides. This Escherichia coli O9:H4 (strain HS) protein is Pyrimidine-specific ribonucleoside hydrolase RihB.